The primary structure comprises 211 residues: Bifunctional transcriptional activator/DNA repair enzyme AdaA (211 aa).

Cysteine 54 (nucleophile; methyl group acceptor from methylphosphotriester) is an active-site residue. Zn(2+)-binding residues include cysteine 54, cysteine 58, cysteine 85, and cysteine 88. An HTH araC/xylS-type domain is found at 102-200 (DLITEYIDKN…GQTPARFRQM (99 aa)). A DNA-binding region (H-T-H motif) is located at residues 119 to 140 (ESLADICHGSPYHMHRTFKKIK).

Zn(2+) is required as a cofactor.

The catalysed reaction is (2'-deoxyribonucleoside 5'-methylphosphotriester)-DNA + L-cysteinyl-[protein] = 2'-deoxyribonucleotide-DNA + S-methyl-L-cysteinyl-[protein] + H(+). Functionally, is involved in the adaptive response to alkylation damage in DNA caused by alkylating agents. Repairs the methylphosphotriester lesions in DNA by a direct and irreversible transfer of the methyl group to one of its own cysteine residues. The methylation of AdaA by methylphosphotriesters in DNA leads to its activation as a transcriptional regulator that activates the transcription of the ada operon which consists of adaA and adaB, and of the adjacent gene alkA. In Bacillus subtilis (strain 168), this protein is Bifunctional transcriptional activator/DNA repair enzyme AdaA (adaA).